The sequence spans 520 residues: 2-isopropylmalate synthase (520 aa).

The region spanning 5–267 (VIIFDTTLRD…YTNINHQEIY (263 aa)) is the Pyruvate carboxyltransferase domain. The Mn(2+) site is built by aspartate 14, histidine 202, histidine 204, and asparagine 238. A regulatory domain region spans residues 392-520 (HLDNFNIQSG…RIQQNTKEMV (129 aa)).

Belongs to the alpha-IPM synthase/homocitrate synthase family. LeuA type 1 subfamily. Homodimer. Mn(2+) serves as cofactor.

Its subcellular location is the cytoplasm. It carries out the reaction 3-methyl-2-oxobutanoate + acetyl-CoA + H2O = (2S)-2-isopropylmalate + CoA + H(+). It participates in amino-acid biosynthesis; L-leucine biosynthesis; L-leucine from 3-methyl-2-oxobutanoate: step 1/4. Functionally, catalyzes the condensation of the acetyl group of acetyl-CoA with 3-methyl-2-oxobutanoate (2-ketoisovalerate) to form 3-carboxy-3-hydroxy-4-methylpentanoate (2-isopropylmalate). The sequence is that of 2-isopropylmalate synthase from Photorhabdus laumondii subsp. laumondii (strain DSM 15139 / CIP 105565 / TT01) (Photorhabdus luminescens subsp. laumondii).